The chain runs to 413 residues: Alpha-1-antitrypsin-like protein GS55-LT (413 aa).

The signal sequence occupies residues Met1–Gly21. Asn65, Asn102, and Asn123 each carry an N-linked (GlcNAc...) asparagine glycan. An RCL region spans residues Arg368 to Arg387.

Belongs to the serpin family.

Its subcellular location is the secreted. Inhibitor of serine proteases. The sequence is that of Alpha-1-antitrypsin-like protein GS55-LT from Ictidomys tridecemlineatus (Thirteen-lined ground squirrel).